The chain runs to 131 residues: D-ribose pyranase (131 aa).

His-20 serves as the catalytic Proton donor. Substrate is bound by residues Asp-28, His-98, and 120-122 (YSN).

The protein belongs to the RbsD / FucU family. RbsD subfamily. In terms of assembly, homodecamer.

The protein resides in the cytoplasm. It carries out the reaction beta-D-ribopyranose = beta-D-ribofuranose. It participates in carbohydrate metabolism; D-ribose degradation; D-ribose 5-phosphate from beta-D-ribopyranose: step 1/2. In terms of biological role, catalyzes the interconversion of beta-pyran and beta-furan forms of D-ribose. The polypeptide is D-ribose pyranase (Lactobacillus johnsonii (strain CNCM I-12250 / La1 / NCC 533)).